A 544-amino-acid polypeptide reads, in one-letter code: Chaperonin GroEL (544 aa).

ATP-binding positions include 30 to 33 (TLGP), Lys51, 87 to 91 (DGTTT), Gly415, and Asp495.

It belongs to the chaperonin (HSP60) family. In terms of assembly, forms a cylinder of 14 subunits composed of two heptameric rings stacked back-to-back. Interacts with the co-chaperonin GroES.

It is found in the cytoplasm. The catalysed reaction is ATP + H2O + a folded polypeptide = ADP + phosphate + an unfolded polypeptide.. Its function is as follows. Together with its co-chaperonin GroES, plays an essential role in assisting protein folding. The GroEL-GroES system forms a nano-cage that allows encapsulation of the non-native substrate proteins and provides a physical environment optimized to promote and accelerate protein folding. The polypeptide is Chaperonin GroEL (Neisseria meningitidis serogroup C (strain 053442)).